We begin with the raw amino-acid sequence, 379 residues long: Cyclic dinucleotide synthase CdnE (379 aa).

Residues Gln107, Ser109, Asp123, and Lys179 each coordinate UTP. Residue Asp123 coordinates Mg(2+). Mg(2+) is bound at residue Asp193. Residues Asn229, Lys257, and Ser274 each contribute to the UTP site. Residues 328 to 330 (KIF) carry the Pyrimidine specificity motif (R/Q)xW in donor pocket motif.

This sequence belongs to the CD-NTase family. E02 subfamily. The cofactor is Mg(2+).

It catalyses the reaction 2 UTP = c-di-UMP + 2 diphosphate. The catalysed reaction is UTP + ATP = 3',3'-cUAMP + 2 diphosphate. It carries out the reaction UTP + CTP = cyclic CMP-UMP + 2 diphosphate. In terms of biological role, cyclic nucleotide synthase (second messenger synthase) of a CBASS antivirus system. CBASS (cyclic oligonucleotide-based antiphage signaling system) provides immunity against bacteriophage. The CD-NTase protein synthesizes cyclic nucleotides in response to infection; these serve as specific second messenger signals. The signals activate a diverse range of effectors, leading to bacterial cell death and thus abortive phage infection. The effector protein for this system is membrane protein Cap15. A type I-B(UU) CBASS system. Its function is as follows. Cyclic dinucleotide synthase that preferentially catalyzes the synthesis of 3',3'-cyclic UMP-UMP (c-di-UMP) and 3',3'-cyclic UMP-AMP, with minor amounts of 3',3'-cyclic UMP-CMP, which are second messengers for cell signal transduction. Protects E.coli against phage infection. When the CBASS operon (cap15-cdnE) is introduced in E.coli MG1655 it protects against phages T2, T4, T5, T6, SECPhi4, SECPhi6, SECPhi17, SECPhi18 and SECPhi27, but not against phage T7. This Yersinia aleksiciae protein is Cyclic dinucleotide synthase CdnE.